A 341-amino-acid chain; its full sequence is MASEAPPFWWDEPDWRALALAPAAWIYGRVSGRRLIRAVPPRVSLPVLCVGNFTVGGAGKTPTAIAFARGAIARGMKPGIVSRGYGGNYSGLHLVDPGHDGARHVGDEPLLLARHAAVALSPDRVKAAEYLKSLGCDFIIMDDGFQSARLHADFSLLVVDASRGIGNGRVIPAGPLRAPLTDQMRKTDALLCIGKGNGADFVIRQAARAGRPIYHAQLRPSSSATVAGRRWLAFAGIGNPDKFYESVRQAGGEVVETHSFADHYSFEPDDIRGLVDMARRQGLGLITTAKDHVRLATMPGVPPEFLSKLAVLDVDLEFDRTDALDHILDTVVERFKSRLHG.

54-61 (TVGGAGKT) contributes to the ATP binding site.

This sequence belongs to the LpxK family.

It carries out the reaction a lipid A disaccharide + ATP = a lipid IVA + ADP + H(+). It participates in glycolipid biosynthesis; lipid IV(A) biosynthesis; lipid IV(A) from (3R)-3-hydroxytetradecanoyl-[acyl-carrier-protein] and UDP-N-acetyl-alpha-D-glucosamine: step 6/6. In terms of biological role, transfers the gamma-phosphate of ATP to the 4'-position of a tetraacyldisaccharide 1-phosphate intermediate (termed DS-1-P) to form tetraacyldisaccharide 1,4'-bis-phosphate (lipid IVA). The chain is Tetraacyldisaccharide 4'-kinase from Brucella melitensis biotype 1 (strain ATCC 23456 / CCUG 17765 / NCTC 10094 / 16M).